The primary structure comprises 425 residues: uncharacterized protein (425 aa).

The region spanning 2–53 is the F-box domain; the sequence is SFNLLDLPIVPRQKALKYLEPIDLFELSLCSKRMAQSVRDLKIEASAHFITL.

This is an uncharacterized protein from Caenorhabditis elegans.